The sequence spans 194 residues: Putative manganese efflux pump MntP (194 aa).

The next 6 helical transmembrane spans lie at Pro3–Gly23, Leu37–Leu57, Ile65–Ile85, Leu112–Phe132, Ile137–Met157, and Ala170–Leu190.

This sequence belongs to the MntP (TC 9.B.29) family.

It localises to the cell inner membrane. Functionally, probably functions as a manganese efflux pump. In Xylella fastidiosa (strain M12), this protein is Putative manganese efflux pump MntP.